The sequence spans 1168 residues: Transcription-repair-coupling factor (1168 aa).

The 162-residue stretch at 633–794 (DMQKSRPMDR…MLGVRDLSVI (162 aa)) folds into the Helicase ATP-binding domain. Position 646–653 (646–653 (GDVGYGKT)) interacts with ATP. Positions 747-750 (DEEQ) match the DEEQ box motif. One can recognise a Helicase C-terminal domain in the interval 808 to 969 (VLEQNMSFIK…GFKIAMRDLN (162 aa)).

This sequence in the N-terminal section; belongs to the UvrB family. It in the C-terminal section; belongs to the helicase family. RecG subfamily.

The protein localises to the cytoplasm. Functionally, couples transcription and DNA repair by recognizing RNA polymerase (RNAP) stalled at DNA lesions. Mediates ATP-dependent release of RNAP and its truncated transcript from the DNA, and recruitment of nucleotide excision repair machinery to the damaged site. This is Transcription-repair-coupling factor from Staphylococcus aureus (strain MSSA476).